Here is a 507-residue protein sequence, read N- to C-terminus: RNA-binding protein Nova-1 (507 aa).

Positions 1-44 (MMAAAPIQQNGTHTGVPIDLDPPDSRKRPLEAPPEAGSTKRTNT) are disordered. Residues 27 to 43 (KRPLEAPPEAGSTKRTN) carry the Bipartite nuclear localization signal motif. Positions 49–116 (QYFLKVLIPS…EALNAVHGFI (68 aa)) constitute a KH 1 domain. The disordered stretch occupies residues 139-171 (QTTVNPDRIKQTLPSSPTTTKSSPSDPMTTSRA). Residues 150–169 (TLPSSPTTTKSSPSDPMTTS) show a composition bias toward low complexity. Ser-154 is modified (phosphoserine). KH domains follow at residues 171–237 (ANQV…VELI) and 421–488 (KDVV…QYLI). Residues 419 to 503 (GSKDVVEIAV…YEQGVRAANP (85 aa)) form a required for RNA binding region.

Interacts with PTBP2; the interaction is direct. In terms of tissue distribution, expressed in neurons of the cortex, sub-cortex, cerebellum and brainstem (at protein level). Expressed in motor neurons, but not in glia.

Its subcellular location is the nucleus. Its function is as follows. Functions to regulate alternative splicing in neurons by binding pre-mRNA in a sequence-specific manner to activate exon inclusion or exclusion. It binds specifically to the sequences 5'-YCAY-3' and regulates splicing in only a subset of regulated exons. Binding to an exonic 5'-YCAY-3' cluster changes the protein complexes assembled on pre-mRNA, blocking U1 snRNP binding and exon inclusion, whereas binding to an intronic 5'-YCAY-3' cluster enhances spliceosome assembly and exon inclusion. Binding to 5'-YCAY-3' clusters results in a local and asymmetric action to regulate spliceosome assembly and alternative splicing in neurons. Binding to an exonic 5'-YCAY-3' cluster changed the protein complexes assembled on pre-mRNA, blocking U1 snRNP (small nuclear ribonucleoprotein) binding and exon inclusion, whereas binding to an intronic 5'-YCAY-3' cluster enhanced spliceosome assembly and exon inclusion. With NOVA1, they perform unique biological functions in different brain areas and cell types. Autoregulates its own expression by acting as a splicing repressor. Acts to activate the inclusion of exon E3A in the glycine receptor alpha-2 chain and of exon E9 in gamma-aminobutyric-acid receptor gamma-2 subunit via a distal downstream UCAU-rich intronic splicing enhancer. Acts to regulate a novel glycine receptor alpha-2 chain splice variant (alpha-2N) in developing spinal cord. This chain is RNA-binding protein Nova-1, found in Mus musculus (Mouse).